The sequence spans 116 residues: Small ribosomal subunit protein bS16 (116 aa).

This sequence belongs to the bacterial ribosomal protein bS16 family.

In Chlamydia muridarum (strain MoPn / Nigg), this protein is Small ribosomal subunit protein bS16.